The chain runs to 784 residues: Toll-like receptor 2 (784 aa).

The first 20 residues, 1 to 20 (MPRALWTAWVWAVIILSTEG), serve as a signal peptide directing secretion. Over 21-587 (ASDQASSLSC…ARLSLSECHR (567 aa)) the chain is Extracellular. Cysteine 30 and cysteine 36 are oxidised to a cystine. 19 LRR repeats span residues 54 to 77 (VKSL…RCVN), 78 to 101 (LKTL…HLRN), 102 to 125 (LEYL…SLYV), 126 to 150 (LKFL…HLPN), 151 to 175 (LRTL…GLTF), 176 to 199 (LEEL…SIQN), 200 to 223 (ISHL…IVSS), 224 to 250 (LDCL…MSTS), 251 to 278 (VKKL…YVSG), 279 to 308 (ILEV…HLGN), 309 to 337 (VETL…LTGK), 338 to 361 (VKRV…HLKS), 362 to 388 (LEYL…AWPF), 389 to 414 (LQTL…TLEN), 415 to 437 (LNSL…WPGK), 438 to 457 (MKQL…CLPQ), 458 to 478 (TLEI…ILPQ), 479 to 500 (LKEL…FLPV), and 501 to 524 (LXVM…SFQQ). N-linked (GlcNAc...) asparagine glycosylation is present at asparagine 114. The N-linked (GlcNAc...) asparagine glycan is linked to asparagine 199. A disulfide bridge links cysteine 353 with cysteine 382. A disulfide bond links cysteine 432 and cysteine 454. Asparagine 442 is a glycosylation site (N-linked (GlcNAc...) asparagine). The LRRCT domain occupies 525 to 579 (LKTLEAGGNNFICSCDFLSFTQGQQALGRVLVDWPDDYHCDSPSHVRGQRVQDAR). A helical transmembrane segment spans residues 588-608 (AAVVSAACCALFLLLLLMGVL). Topologically, residues 609-784 (CHRFHGLWYM…WLNLRAAIRS (176 aa)) are cytoplasmic. The TIR domain occupies 639-782 (ICYDAFVSYS…GFWLNLRAAI (144 aa)). Residue lysine 754 forms a Glycyl lysine isopeptide (Lys-Gly) (interchain with G-Cter in ubiquitin) linkage. The short motif at 761–778 (YLEWPVDETQQEGFWLNL) is the ATG16L1-binding motif element.

The protein belongs to the Toll-like receptor family. In terms of assembly, interacts with LY96, TLR1 and TLR6 (via extracellular domain). TLR2 seems to exist in heterodimers with either TLR1 or TLR6 before stimulation by the ligand. The heterodimers form bigger oligomers in response to their corresponding ligands as well as further heterotypic associations with other receptors such as CD14 and/or CD36. Binds MYD88 (via TIR domain). Interacts with TICAM1. Interacts with CNPY3. Interacts with ATG16L1. Interacts with PPP1R11. Interacts with TICAM2. Interacts with TIRAP. In terms of processing, ubiquitinated at Lys-754 by PPP1R11, leading to its degradation. Deubiquitinated by USP2. Glycosylation of Asn-442 is critical for secretion of the N-terminal ectodomain of TLR2.

It localises to the membrane. Its subcellular location is the cytoplasmic vesicle. It is found in the phagosome membrane. The protein resides in the membrane raft. Cooperates with LY96 to mediate the innate immune response to bacterial lipoproteins and other microbial cell wall components. Cooperates with TLR1 or TLR6 to mediate the innate immune response to bacterial lipoproteins or lipopeptides. Acts via MYD88 and TRAF6, leading to NF-kappa-B activation, cytokine secretion and the inflammatory response. May also promote apoptosis in response to lipoproteins. Forms activation clusters composed of several receptors depending on the ligand, these clusters trigger signaling from the cell surface and subsequently are targeted to the Golgi in a lipid-raft dependent pathway. Forms the cluster TLR2:TLR6:CD14:CD36 in response to diacylated lipopeptides and TLR2:TLR1:CD14 in response to triacylated lipopeptides. In Bos indicus (Zebu), this protein is Toll-like receptor 2 (TLR2).